Reading from the N-terminus, the 343-residue chain is Protein phosphatase 2C homolog 7, mitochondrial (343 aa).

The N-terminal 39 residues, 1–39, are a transit peptide targeting the mitochondrion; it reads MFANVGFRTLRVSRGPLYGSCSQIISFSKRTFYSSAKSG. The PPM-type phosphatase domain occupies 76-342; the sequence is IYQKLKDSIR…DDITVVVVRV (267 aa). 3 residues coordinate Mn(2+): aspartate 109, glycine 110, and aspartate 265.

The cofactor is Mg(2+). It depends on Mn(2+) as a cofactor.

Its subcellular location is the mitochondrion. The enzyme catalyses O-phospho-L-seryl-[protein] + H2O = L-seryl-[protein] + phosphate. The catalysed reaction is O-phospho-L-threonyl-[protein] + H2O = L-threonyl-[protein] + phosphate. Protein phosphatase which positively regulates biosynthesis of the ubiquinone, coenzyme Q. Dephosphorylates and activates the ubiquinone biosynthesis protein CAT5/COQ7. Also dephosphorylates CIT1 on 'Ser-462', which leads to its activation. This Saccharomyces cerevisiae (strain ATCC 204508 / S288c) (Baker's yeast) protein is Protein phosphatase 2C homolog 7, mitochondrial (PTC7).